Reading from the N-terminus, the 555-residue chain is Formate--tetrahydrofolate ligase (555 aa).

65–72 contributes to the ATP binding site; it reads TPAGEGKS.

It belongs to the formate--tetrahydrofolate ligase family.

It carries out the reaction (6S)-5,6,7,8-tetrahydrofolate + formate + ATP = (6R)-10-formyltetrahydrofolate + ADP + phosphate. It functions in the pathway one-carbon metabolism; tetrahydrofolate interconversion. The chain is Formate--tetrahydrofolate ligase from Staphylococcus carnosus (strain TM300).